The sequence spans 114 residues: MDVIKQIEQEQMRYDLPQFEAGDTVNVHVRIIEGTKERLQAFKGVVIAKKSGTTNATFTVRKVSYGVGVERVFHAHSPSIDHIEVVSRGKVRRAKLYYLRKLRGKAARIKEKRF.

The protein belongs to the bacterial ribosomal protein bL19 family.

Functionally, this protein is located at the 30S-50S ribosomal subunit interface and may play a role in the structure and function of the aminoacyl-tRNA binding site. The sequence is that of Large ribosomal subunit protein bL19 from Desulfatibacillum aliphaticivorans.